The primary structure comprises 491 residues: UDP-N-acetylmuramate--L-alanine ligase (491 aa).

An ATP-binding site is contributed by 126-132; the sequence is GTHGKTT.

This sequence belongs to the MurCDEF family.

The protein resides in the cytoplasm. It catalyses the reaction UDP-N-acetyl-alpha-D-muramate + L-alanine + ATP = UDP-N-acetyl-alpha-D-muramoyl-L-alanine + ADP + phosphate + H(+). It functions in the pathway cell wall biogenesis; peptidoglycan biosynthesis. Functionally, cell wall formation. The polypeptide is UDP-N-acetylmuramate--L-alanine ligase (Klebsiella pneumoniae subsp. pneumoniae (strain ATCC 700721 / MGH 78578)).